A 311-amino-acid polypeptide reads, in one-letter code: Olfactory receptor 1D4 (311 aa).

Over 1–25 (MDGDNQSENSQFLLLGISESPEQQQ) the chain is Extracellular. Asn5 carries N-linked (GlcNAc...) asparagine glycosylation. A helical membrane pass occupies residues 26–49 (ILFWMFLSMYLVTVLGNVLIILAI). The Cytoplasmic segment spans residues 50-57 (SSDSHLHT). Residues 58–79 (PMYFFLANLSFTDLFFVTNTIP) form a helical membrane-spanning segment. Over 80 to 100 (KMLVNFQSQNKAISYAGCLTQ) the chain is Extracellular. An intrachain disulfide couples Cys97 to Cys189. A helical membrane pass occupies residues 101–120 (LYFLVSLVTLDNLILAVMAY). The Cytoplasmic portion of the chain corresponds to 121-140 (DRYVAICCPLHYVTAMSPGL). The helical transmembrane segment at 141-158 (CVLLLSLCWGLSVLYGLL) threads the bilayer. Over 159 to 196 (LTFLLTRVTFCGPREIHYLFCDMYILLWLACSNTHIIH) the chain is Extracellular. The helical transmembrane segment at 197-220 (TALIATGCFIFLTLLGFMTTSYVR) threads the bilayer. Residues 221 to 237 (IVRTILQMPSASKKYKT) are Cytoplasmic-facing. The helical transmembrane segment at 238 to 260 (FSTCASHLGVVSLFYGTLAMVYL) threads the bilayer. Topologically, residues 261-271 (QPLHTYSMKDS) are extracellular. The helical transmembrane segment at 272 to 291 (VATVMYAVLTPMMNPFIYSL) threads the bilayer. The Cytoplasmic segment spans residues 292–311 (RNKDMHGAPGRVLWRPFQRP).

The protein belongs to the G-protein coupled receptor 1 family.

The protein resides in the cell membrane. In terms of biological role, odorant receptor. The sequence is that of Olfactory receptor 1D4 (OR1D4) from Homo sapiens (Human).